The chain runs to 200 residues: Oligoribonuclease (200 aa).

Residues Met5–Leu169 enclose the Exonuclease domain. Residue Tyr126 is part of the active site.

This sequence belongs to the oligoribonuclease family.

The protein resides in the cytoplasm. 3'-to-5' exoribonuclease specific for small oligoribonucleotides. The polypeptide is Oligoribonuclease (Streptomyces avermitilis (strain ATCC 31267 / DSM 46492 / JCM 5070 / NBRC 14893 / NCIMB 12804 / NRRL 8165 / MA-4680)).